A 146-amino-acid chain; its full sequence is Large ribosomal subunit protein uL15 (146 aa).

Residues 1–13 are compositionally biased toward basic and acidic residues; it reads MKLNELHPSEGSR. The disordered stretch occupies residues 1-56; sequence MKLNELHPSEGSRHARKRVGRGTSSGFGKTSGRGQKGQHARSGGNTRLGFEGGQMP. The span at 23 to 35 shows a compositional bias: gly residues; that stretch reads TSSGFGKTSGRGQ.

This sequence belongs to the universal ribosomal protein uL15 family. Part of the 50S ribosomal subunit.

In terms of biological role, binds to the 23S rRNA. This Lactobacillus delbrueckii subsp. bulgaricus (strain ATCC 11842 / DSM 20081 / BCRC 10696 / JCM 1002 / NBRC 13953 / NCIMB 11778 / NCTC 12712 / WDCM 00102 / Lb 14) protein is Large ribosomal subunit protein uL15.